Consider the following 376-residue polypeptide: MASPKLHDFRHIVVKVGSSLLIDSAAGEVRAGWLAALAADIAELHRGGRDVMVVSSGSIALGRSRLKLPRGPLKLEESQAAAAVGQIELARTWSEVLGAHGIGAGQILVTFQDTEERRRYLNARSTIAKLLEWRAVPVINENDTVATTEIRYGDNDRLAARVATMASADLLILLSDIDGLYTAPPGNDPDATLIPVVEAITAEIEGMAGAAGSELSRGGMRTKIEAAKIATSAGTHMLIASGKIDHPLRAIAEGGKCTWFLTPANPVTARKRWIAGTLEPKGTLTIDAGAVSALRAGKSLLPAGVIRVDGQFSRGDAVIVRGPDTHEIGRGLVAYDAEDAEKIKGHSSPDVMMILGITGRAEMIHRDDLVVGTAPT.

Lys-15 contributes to the ATP binding site. The substrate site is built by Ser-56, Asp-143, and Asn-155. 175-176 contacts ATP; sequence SD. Residues 281–358 enclose the PUA domain; it reads KGTLTIDAGA…PDVMMILGIT (78 aa).

It belongs to the glutamate 5-kinase family.

Its subcellular location is the cytoplasm. It catalyses the reaction L-glutamate + ATP = L-glutamyl 5-phosphate + ADP. It functions in the pathway amino-acid biosynthesis; L-proline biosynthesis; L-glutamate 5-semialdehyde from L-glutamate: step 1/2. Functionally, catalyzes the transfer of a phosphate group to glutamate to form L-glutamate 5-phosphate. This chain is Glutamate 5-kinase, found in Rhodopseudomonas palustris (strain TIE-1).